The chain runs to 166 residues: Ureidoglycolate lyase (166 aa).

This sequence belongs to the ureidoglycolate lyase family. In terms of assembly, homodimer. It depends on Ni(2+) as a cofactor.

It carries out the reaction (S)-ureidoglycolate = urea + glyoxylate. It functions in the pathway nitrogen metabolism; (S)-allantoin degradation. In terms of biological role, catalyzes the catabolism of the allantoin degradation intermediate (S)-ureidoglycolate, generating urea and glyoxylate. Involved in the utilization of allantoin as nitrogen source. The polypeptide is Ureidoglycolate lyase (Azotobacter vinelandii (strain DJ / ATCC BAA-1303)).